Consider the following 417-residue polypeptide: Inactive cytochrome P450 76AD1 (417 aa).

The helical transmembrane segment at 4-24 (ATLAMILAIWFISFHFIKLLF) threads the bilayer.

This sequence belongs to the cytochrome P450 family.

It is found in the membrane. The protein operates within pigment biosynthesis; betalain biosynthesis. Inactive cytochrome unable to convert L-DOPA to cyclo-DOPA in the betalain pathway and producing a yellow mutant phenotype. A frameshift replaces 108 amino acids of the active protein found in red beets (AC I3PFJ5) with 27 new residues followed by a stop codon. This chain is Inactive cytochrome P450 76AD1, found in Beta vulgaris (Sugar beet).